Here is a 644-residue protein sequence, read N- to C-terminus: Arginine--tRNA ligase (644 aa).

Residues 134–144 (VNPTKPLHMGH) carry the 'HIGH' region motif.

Belongs to the class-I aminoacyl-tRNA synthetase family.

Its subcellular location is the cytoplasm. It carries out the reaction tRNA(Arg) + L-arginine + ATP = L-arginyl-tRNA(Arg) + AMP + diphosphate. The protein is Arginine--tRNA ligase of Thermococcus sibiricus (strain DSM 12597 / MM 739).